Here is a 376-residue protein sequence, read N- to C-terminus: Dehydrogenase/reductase SDR family member FEY (376 aa).

Ser2 is subject to N-acetylserine. 61 to 85 contributes to the NAD(+) binding site; sequence VVTGSTSGIGRETARQLAEAGAHVV. A substrate-binding site is contributed by Ser199. The active-site Proton acceptor is the Tyr227.

Belongs to the short-chain dehydrogenases/reductases (SDR) family. Expressed in roots, stems, leaves and flowers and, at lower levels, in siliques.

Its function is as follows. Putative oxidoreductase. Required for vegetative shoot apex development, especially during leaf positioning and for shoot apical meristem (SAM) maintenance. This Arabidopsis thaliana (Mouse-ear cress) protein is Dehydrogenase/reductase SDR family member FEY.